Here is a 227-residue protein sequence, read N- to C-terminus: Phosphoglycolate phosphatase (227 aa).

The Nucleophile role is filled by D13. Positions 13, 15, and 176 each coordinate Mg(2+).

The protein belongs to the HAD-like hydrolase superfamily. CbbY/CbbZ/Gph/YieH family. Mg(2+) is required as a cofactor.

It catalyses the reaction 2-phosphoglycolate + H2O = glycolate + phosphate. It functions in the pathway organic acid metabolism; glycolate biosynthesis; glycolate from 2-phosphoglycolate: step 1/1. Specifically catalyzes the dephosphorylation of 2-phosphoglycolate. Is involved in the dissimilation of the intracellular 2-phosphoglycolate formed during the DNA repair of 3'-phosphoglycolate ends, a major class of DNA lesions induced by oxidative stress. In Nitrosospira multiformis (strain ATCC 25196 / NCIMB 11849 / C 71), this protein is Phosphoglycolate phosphatase.